The primary structure comprises 277 residues: Undecaprenyl-diphosphatase (277 aa).

Helical transmembrane passes span 85–105, 109–129, 188–208, 218–238, and 256–276; these read VNIV…AGAI, LFAP…ILWV, ATEF…VYSV, ADIP…FLCV, and YRIG…VVWA.

This sequence belongs to the UppP family.

Its subcellular location is the cell inner membrane. The catalysed reaction is di-trans,octa-cis-undecaprenyl diphosphate + H2O = di-trans,octa-cis-undecaprenyl phosphate + phosphate + H(+). Functionally, catalyzes the dephosphorylation of undecaprenyl diphosphate (UPP). Confers resistance to bacitracin. The chain is Undecaprenyl-diphosphatase from Herminiimonas arsenicoxydans.